Here is a 227-residue protein sequence, read N- to C-terminus: LysM and putative peptidoglycan-binding domain-containing protein 1 (227 aa).

Residues 1-11 (MASPSRQPPPG) show a composition bias toward pro residues. A disordered region spans residues 1-20 (MASPSRQPPPGGSGLLHGSR). Ser23 and Ser33 each carry phosphoserine. The LysM domain maps to 40–84 (LEHQLEPGDTLAGLALKYGVTMEQIKRANRLYTNDSIFLKKTLYI). A disordered region spans residues 95–150 (NGLDSEEEKDGEEEVRPSNDEVWPHSTERKKQETGAGRANGEVFPTPGQETPTPIH). Residues 98–107 (DSEEEKDGEE) are compositionally biased toward acidic residues. Phosphoserine is present on Ser99. The segment covering 108–127 (EVRPSNDEVWPHSTERKKQE) has biased composition (basic and acidic residues). Residues Ser166, Ser181, Ser194, and Ser212 each carry the phosphoserine modification. The segment at 172–196 (AAQKLKKGESGVPGEDAGLHLSSPR) is disordered.

This Macaca fascicularis (Crab-eating macaque) protein is LysM and putative peptidoglycan-binding domain-containing protein 1 (LYSMD1).